A 193-amino-acid chain; its full sequence is Guanylate kinase (193 aa).

The Guanylate kinase-like domain occupies 12–191; that stretch reads DLLTIVAGPT…AANELWLAMN (180 aa). 19–26 provides a ligand contact to ATP; the sequence is GPTAVGKG.

It belongs to the guanylate kinase family.

The protein localises to the cytoplasm. The enzyme catalyses GMP + ATP = GDP + ADP. In terms of biological role, essential for recycling GMP and indirectly, cGMP. In Tropheryma whipplei (strain TW08/27) (Whipple's bacillus), this protein is Guanylate kinase.